Consider the following 254-residue polypeptide: Proteasome subunit alpha (254 aa).

Residues 232-254 (PEVDSSESSNEAEAGAEKGSGES) are disordered.

It belongs to the peptidase T1A family. The 20S proteasome core is composed of 14 alpha and 14 beta subunits that assemble into four stacked heptameric rings, resulting in a barrel-shaped structure. The two inner rings, each composed of seven catalytic beta subunits, are sandwiched by two outer rings, each composed of seven alpha subunits. The catalytic chamber with the active sites is on the inside of the barrel. Has a gated structure, the ends of the cylinder being occluded by the N-termini of the alpha-subunits. Is capped by the proteasome-associated ATPase, ARC.

Its subcellular location is the cytoplasm. The protein operates within protein degradation; proteasomal Pup-dependent pathway. Its activity is regulated as follows. The formation of the proteasomal ATPase ARC-20S proteasome complex, likely via the docking of the C-termini of ARC into the intersubunit pockets in the alpha-rings, may trigger opening of the gate for substrate entry. Interconversion between the open-gate and close-gate conformations leads to a dynamic regulation of the 20S proteasome proteolysis activity. Functionally, component of the proteasome core, a large protease complex with broad specificity involved in protein degradation. This is Proteasome subunit alpha from Mycolicibacterium vanbaalenii (strain DSM 7251 / JCM 13017 / BCRC 16820 / KCTC 9966 / NRRL B-24157 / PYR-1) (Mycobacterium vanbaalenii).